Here is a 639-residue protein sequence, read N- to C-terminus: Protein argonaute (639 aa).

The N-terminal domain stretch occupies residues 1-100 (MYLNLYKIDI…YIKKLFLDND (100 aa)). The interval 101-153 (FYFKKGNNFISNSEVFSLDSNENVNAHLTYKIKIHNISNEYYLSILPKFTFLS) is linker L1. The interval 154–209 (KEPALESAIKSGYLYNIKSGKSFPYISGLDGILKIDIGNNQIVEVAYPENYLFNFT) is PAZ domain. Residues 210–292 (TRDAEKYGFS…KYSFYKNEQP (83 aa)) are linker L2. Residues 293–424 (LKAIFFFSSK…YVYKMGNFIP (132 aa)) are mid domain. The tract at residues 425–639 (ECKPFILKKM…DYEWKLYIPY (215 aa)) is PIWI domain. Residues aspartate 446, glutamate 482, aspartate 516, and asparagine 624 contribute to the active site. A Mn(2+)-binding site is contributed by aspartate 446. Mn(2+)-binding residues include aspartate 516 and asparagine 624.

The protein belongs to the argonaute family. Long pAgo subfamily. Mn(2+) serves as cofactor.

Its subcellular location is the cytoplasm. Functionally, an RNA-guided ssDNA endonuclease that may play a role in defense against invading mobile genetic elements. Uses short 5'-OH-ssRNA sequences as guides (gRNA) to bind complementary target DNA (tDNA) or target RNA resulting in target cleavage. The cleavage site is 10 nucleotides (nt) downstream of the target residue base-paired with the 5'-end of the gRNA. Reaction rates are fastest on 5'-OH-gRNA:tDNA followed by 5'-OH-gRNA:target RNA. gRNA between 17-21 nt supports equivalent rates of cleavage, has no preferred 5'-nt. Has weak activity on tDNA with 5'-phospho-gRNA, yielding products 1-2 nt longer. Unlike other characterized prokaryotic Ago proteins symmetric mismatches centered around the cleavage site reduce cleavage efficiency. The polypeptide is Protein argonaute (Marinitoga piezophila (strain DSM 14283 / JCM 11233 / KA3)).